Consider the following 91-residue polypeptide: Insertion element IS1 1 protein InsA (91 aa).

The protein belongs to the IS1 elements InsA family.

In terms of biological role, absolutely required for transposition of IS1. This is Insertion element IS1 1 protein InsA (insA1) from Escherichia coli (strain K12).